The following is a 263-amino-acid chain: HLA class II histocompatibility antigen, DM beta chain (263 aa).

Positions 1 to 18 are cleaved as a signal peptide; it reads MITFLPLLLGLSLGCTGA. The beta-1 stretch occupies residues 19-112; that stretch reads GGFVAHVEST…PFWGSLTNRT (94 aa). Residues 19–218 are Lumenal-facing; the sequence is GGFVAHVEST…PGLSPMQTLK (200 aa). Disulfide bonds link Cys-29/Cys-97 and Cys-43/Cys-53. A glycan (N-linked (GlcNAc...) asparagine) is linked at Asn-110. The interval 113–207 is beta-2; sequence RPPSVQVAKT…GAPEPILRDW (95 aa). In terms of domain architecture, Ig-like C1-type spans 114-208; it reads PPSVQVAKTT…APEPILRDWT (95 aa). A disulfide bridge links Cys-135 with Cys-192. Positions 208–218 are connecting peptide; the sequence is TPGLSPMQTLK. Residues 219–239 form a helical membrane-spanning segment; it reads VSVSAVTLGLGLIIFSLGVIS. The Cytoplasmic portion of the chain corresponds to 240 to 263; the sequence is WRRAGHSSYTPLPGSNYSEGWHIS. The short motif at 248-251 is the YXXZ motif element; the sequence is YTPL.

The protein belongs to the MHC class II family. As to quaternary structure, heterodimer of an alpha chain (DMA) and a beta chain (DMB). Interacts with MHCII; this interaction mediates rapid selection of high-affinity peptides in a pH-dependent manner, with an optimum at pH 5.5.

The protein resides in the late endosome membrane. Its subcellular location is the lysosome membrane. Plays a critical role in catalyzing the release of class II-associated invariant chain peptide (CLIP) from newly synthesized MHC class II molecules and freeing the peptide binding site for acquisition of antigenic peptides. In B-cells, the interaction between HLA-DM and MHC class II molecules is regulated by HLA-DO. In Homo sapiens (Human), this protein is HLA class II histocompatibility antigen, DM beta chain (HLA-DMB).